The following is a 220-amino-acid chain: Small ribosomal subunit protein mS23 (220 aa).

It belongs to the mitochondrion-specific ribosomal protein mS23 family. As to quaternary structure, component of the mitochondrial small ribosomal subunit (mt-SSU). Mature yeast 74S mitochondrial ribosomes consist of a small (37S) and a large (54S) subunit. The 37S small subunit contains a 15S ribosomal RNA (15S mt-rRNA) and at least 32 different proteins. The 54S large subunit contains a 21S rRNA (21S mt-rRNA) and at least 45 different proteins.

It localises to the mitochondrion. Its function is as follows. Component of the mitochondrial ribosome (mitoribosome), a dedicated translation machinery responsible for the synthesis of mitochondrial genome-encoded proteins, including at least some of the essential transmembrane subunits of the mitochondrial respiratory chain. The mitoribosomes are attached to the mitochondrial inner membrane and translation products are cotranslationally integrated into the membrane. The polypeptide is Small ribosomal subunit protein mS23 (rsm25) (Schizosaccharomyces pombe (strain 972 / ATCC 24843) (Fission yeast)).